We begin with the raw amino-acid sequence, 729 residues long: Phosphoribosylformylglycinamidine synthase subunit PurL (729 aa).

H42 is an active-site residue. ATP is bound by residues Y45 and K84. E86 is a binding site for Mg(2+). Substrate-binding positions include 87–90 and R109; that span reads SHNH. H88 acts as the Proton acceptor in catalysis. D110 contributes to the Mg(2+) binding site. Q238 provides a ligand contact to substrate. D266 contributes to the Mg(2+) binding site. 310–312 serves as a coordination point for substrate; the sequence is ESQ. 2 residues coordinate ATP: D492 and G529. Residue N530 participates in Mg(2+) binding. S532 contributes to the substrate binding site.

Belongs to the FGAMS family. As to quaternary structure, monomer. Part of the FGAM synthase complex composed of 1 PurL, 1 PurQ and 2 PurS subunits.

It localises to the cytoplasm. The enzyme catalyses N(2)-formyl-N(1)-(5-phospho-beta-D-ribosyl)glycinamide + L-glutamine + ATP + H2O = 2-formamido-N(1)-(5-O-phospho-beta-D-ribosyl)acetamidine + L-glutamate + ADP + phosphate + H(+). The protein operates within purine metabolism; IMP biosynthesis via de novo pathway; 5-amino-1-(5-phospho-D-ribosyl)imidazole from N(2)-formyl-N(1)-(5-phospho-D-ribosyl)glycinamide: step 1/2. Part of the phosphoribosylformylglycinamidine synthase complex involved in the purines biosynthetic pathway. Catalyzes the ATP-dependent conversion of formylglycinamide ribonucleotide (FGAR) and glutamine to yield formylglycinamidine ribonucleotide (FGAM) and glutamate. The FGAM synthase complex is composed of three subunits. PurQ produces an ammonia molecule by converting glutamine to glutamate. PurL transfers the ammonia molecule to FGAR to form FGAM in an ATP-dependent manner. PurS interacts with PurQ and PurL and is thought to assist in the transfer of the ammonia molecule from PurQ to PurL. The polypeptide is Phosphoribosylformylglycinamidine synthase subunit PurL (Campylobacter curvus (strain 525.92)).